The chain runs to 715 residues: Protein DOA1 (715 aa).

WD repeat units lie at residues 11-40 (GHDQ…RLWS), 53-82 (GQGF…NGVP), 97-125 (GHQG…KVWK), 135-166 (AHNA…KLWQ), 177-206 (IHND…KLVD), 218-247 (GHES…RIWS), and 259-288 (LPAI…RIFS). Ser332 carries the post-translational modification Phosphoserine. The PFU domain maps to 352-449 (AHQFSNSSWK…NGISLDQPND (98 aa)). The tract at residues 434-440 (FILKNTN) is interaction with HSE1. The region spanning 465–715 (KVLPVKQYLI…RFKDIFDDLS (251 aa)) is the PUL domain. ARM repeat units lie at residues 478–512 (YNPD…LHDI), 513–543 (DESW…VRLI), 544–582 (VKKL…CFNN), 583–635 (ENWG…LVTK), 636–680 (GNSD…LATV), and 681–715 (EPTL…DDLS).

Belongs to the WD repeat PLAP family. In terms of assembly, forms a complex composed of CDC48, NPL4, UFD1, DOA1, SHP1 and deubiquitinase OTU1; within the complex interacts with CDC48. Interacts (via PUL domain) with CDC48 (via C-terminus); the interaction is direct. Forms a complex composed of CDC48, DOA1, deubiquitinase UBP3 and probably BRE5; within the complex interacts with CDC48 and UBP3. May form a complex composed of VPS27, HSE1 and DOA1. Interacts with HSE1 (via SH3 domain). Interacts (via WD repeats and PFU domain) with ubiquitin; the interaction is direct. Interacts with ubiquitinated FZO1 but not unmodified FZO1; the interaction recruits FZO1 to CDC48 and promotes FZO1 proteasomal degradation.

The protein localises to the nucleus. Its subcellular location is the cytoplasm. The protein resides in the mitochondrion outer membrane. It localises to the endosome membrane. In terms of biological role, ubiquitin-binding protein involved in protein ubiquitination, sorting and degradation. Acts as a ubiquitinated substrate-recruiting adapter for chaperone ATPase CDC48 by binding mono- or polyubiquitin chains. Depending on the context, promotes or prevents proteasomal degradation of ubiquitinated proteins. Involved in the ubiquitin fusion degradation (UFD) pathway by promoting the degradation of ubiquitinated proteins. Involved in the mitochondria-associated degradation pathway (MAD) by promoting the degradation of several ubiquitinated membrane proteins. By competing with UFD2 to bind CDC48, prevents the multi-ubiquitination and subsequent degradation of UFD2-dependent substrates. Required for ribophagy, a process which relocalizes ribosomal particles into the vacuole for degradation in response to starvation. Involved in the ubiquitin-mediated sorting of membrane proteins into multivesicular bodies (MVBs). In addition, plays an essential role in maintaining cellular ubiquitin levels. May affect indirectly the degradation of ubiquitinylated proteins by regulating cellular ubiquitin levels. The sequence is that of Protein DOA1 from Saccharomyces cerevisiae (strain ATCC 204508 / S288c) (Baker's yeast).